Consider the following 340-residue polypeptide: Undecaprenyl-phosphate 4-deoxy-4-formamido-L-arabinose transferase (340 aa).

The next 2 membrane-spanning stretches (helical) occupy residues 235–255 and 269–289; these read LSIV…ALIF and LFVL…GMGL.

It belongs to the glycosyltransferase 2 family.

Its subcellular location is the cell inner membrane. It carries out the reaction UDP-4-deoxy-4-formamido-beta-L-arabinose + di-trans,octa-cis-undecaprenyl phosphate = 4-deoxy-4-formamido-alpha-L-arabinopyranosyl di-trans,octa-cis-undecaprenyl phosphate + UDP. It functions in the pathway glycolipid biosynthesis; 4-amino-4-deoxy-alpha-L-arabinose undecaprenyl phosphate biosynthesis; 4-amino-4-deoxy-alpha-L-arabinose undecaprenyl phosphate from UDP-4-deoxy-4-formamido-beta-L-arabinose and undecaprenyl phosphate: step 1/2. The protein operates within bacterial outer membrane biogenesis; lipopolysaccharide biosynthesis. Catalyzes the transfer of 4-deoxy-4-formamido-L-arabinose from UDP to undecaprenyl phosphate. The modified arabinose is attached to lipid A and is required for resistance to polymyxin and cationic antimicrobial peptides. The polypeptide is Undecaprenyl-phosphate 4-deoxy-4-formamido-L-arabinose transferase (Pseudomonas fluorescens (strain Pf0-1)).